We begin with the raw amino-acid sequence, 100 residues long: UPF0125 protein HD_1828 (100 aa).

This sequence belongs to the UPF0125 (RnfH) family.

The sequence is that of UPF0125 protein HD_1828 from Haemophilus ducreyi (strain 35000HP / ATCC 700724).